The chain runs to 636 residues: Epithelial sodium channel subunit alpha (636 aa).

Residues 1–28 (MKSENQPEDKRIGKLKREANMQKMKEAA) form a disordered region. Residues 1 to 77 (MKSENQPEDK…VCSKKNRMKT (77 aa)) lie on the Cytoplasmic side of the membrane. The helical transmembrane segment at 78-98 (AFWSILFFFTFGLMYWQFGII) threads the bilayer. Topologically, residues 99 to 549 (YREYFSFPVN…SQWSLWFGSS (451 aa)) are extracellular. 10 cysteine pairs are disulfide-bonded: Cys126–Cys293, Cys218–Cys225, Cys270–Cys277, Cys381–Cys466, Cys403–Cys443, Cys403–Cys462, Cys407–Cys458, Cys416–Cys443, Cys416–Cys466, and Cys418–Cys432. The chain crosses the membrane as a helical span at residues 550–570 (VLSVVELVELILDFIAITCIL). Residues 571-636 (AIHWLNMNRS…LRRVSSQQTE (66 aa)) lie on the Cytoplasmic side of the membrane.

Belongs to the amiloride-sensitive sodium channel (TC 1.A.6) family. SCNN1A subfamily. Heterotrimer; containing an alpha/SCNN1A, a beta/SCNN1B and a gamma/SCNN1G subunit.

Its subcellular location is the apical cell membrane. The protein resides in the cell projection. It localises to the cilium. The protein localises to the cytoplasmic granule. It is found in the cytoplasm. Its subcellular location is the cytoplasmic vesicle. The protein resides in the secretory vesicle. It localises to the acrosome. The protein localises to the flagellum. The catalysed reaction is Na(+)(in) = Na(+)(out). Its activity is regulated as follows. Originally identified and characterized by its inhibition by the diuretic drug amiloride. Functionally, this is one of the three pore-forming subunits of the heterotrimeric epithelial sodium channel (ENaC), a critical regulator of sodium balance and fluid homeostasis. ENaC operates in epithelial tissues, where it mediates the electrodiffusion of sodium ions from extracellular fluid through the apical membrane of cells, with water following osmotically. The polypeptide is Epithelial sodium channel subunit alpha (Anolis carolinensis (Green anole)).